The sequence spans 327 residues: Tryptophan--tRNA ligase (327 aa).

ATP contacts are provided by residues 9-11 and 17-18; these read RPT and GN. The 'HIGH' region motif lies at 10 to 18; the sequence is PTGNLHLGN. Residue D133 coordinates L-tryptophan. Residues 145–147, V186, and 194–198 contribute to the ATP site; these read GKD and KMGKS. The 'KMSKS' region signature appears at 194–198; sequence KMGKS.

Belongs to the class-I aminoacyl-tRNA synthetase family. In terms of assembly, homodimer.

It is found in the cytoplasm. It catalyses the reaction tRNA(Trp) + L-tryptophan + ATP = L-tryptophyl-tRNA(Trp) + AMP + diphosphate + H(+). Catalyzes the attachment of tryptophan to tRNA(Trp). This is Tryptophan--tRNA ligase from Porphyromonas gingivalis (strain ATCC BAA-308 / W83).